The primary structure comprises 219 residues: Probable GTP-binding protein EngB (219 aa).

An EngB-type G domain is found at 24 to 207 (VQPEVAFAGR…HALIESWVRP (184 aa)). Residues 32–39 (GRSNAGKS), 59–63 (GRTQH), 81–84 (DLPG), 148–151 (TKCD), and 185–188 (LFSA) each bind GTP. Mg(2+)-binding residues include Ser39 and Thr61.

Belongs to the TRAFAC class TrmE-Era-EngA-EngB-Septin-like GTPase superfamily. EngB GTPase family. Requires Mg(2+) as cofactor.

In terms of biological role, necessary for normal cell division and for the maintenance of normal septation. The chain is Probable GTP-binding protein EngB from Burkholderia mallei (strain ATCC 23344).